The chain runs to 128 residues: Cytochrome c' (128 aa).

Heme c contacts are provided by Q13, Q17, E69, T70, C118, C121, and H122.

As to quaternary structure, homodimer. Post-translationally, binds 1 heme c group covalently per subunit.

Its function is as follows. Cytochrome c' is the most widely occurring bacterial c-type cytochrome. Cytochromes c' are high-spin proteins and the heme has no sixth ligand. Their exact function is not known. The polypeptide is Cytochrome c' (Magnetospirillum molischianum (Rhodospirillum molischianum)).